Here is a 66-residue protein sequence, read N- to C-terminus: Probable Sec-independent protein translocase protein TatE (66 aa).

A helical membrane pass occupies residues 1–21 (MEGISITKLLVIAVLIVLLFG). Residues 46 to 66 (ETPAAKKSDGVEAAPRVENKE) form a disordered region.

This sequence belongs to the TatA/E family. TatE subfamily.

It is found in the cell inner membrane. Functionally, part of the twin-arginine translocation (Tat) system that transports large folded proteins containing a characteristic twin-arginine motif in their signal peptide across membranes. TatE shares overlapping functions with TatA. The sequence is that of Probable Sec-independent protein translocase protein TatE from Edwardsiella ictaluri (strain 93-146).